A 61-amino-acid chain; its full sequence is Small ribosomal subunit protein uS14 (61 aa).

The Zn(2+) site is built by cysteine 24, cysteine 27, cysteine 40, and cysteine 43.

Belongs to the universal ribosomal protein uS14 family. Zinc-binding uS14 subfamily. Part of the 30S ribosomal subunit. Contacts proteins S3 and S10. Zn(2+) serves as cofactor.

Functionally, binds 16S rRNA, required for the assembly of 30S particles and may also be responsible for determining the conformation of the 16S rRNA at the A site. The chain is Small ribosomal subunit protein uS14 from Clostridium perfringens (strain ATCC 13124 / DSM 756 / JCM 1290 / NCIMB 6125 / NCTC 8237 / Type A).